We begin with the raw amino-acid sequence, 493 residues long: UDP-N-acetylmuramoyl-L-alanyl-D-glutamate--L-lysine ligase (493 aa).

Serine 30 is a UDP-N-acetyl-alpha-D-muramoyl-L-alanyl-D-glutamate binding site. Position 110–116 (110–116 (GTNGKTS)) interacts with ATP. UDP-N-acetyl-alpha-D-muramoyl-L-alanyl-D-glutamate contacts are provided by residues asparagine 151, 152-153 (TT), serine 179, and arginine 187. At lysine 219 the chain carries N6-carboxylysine. The short motif at 406 to 409 (DNPA) is the L-lysine recognition motif element.

It belongs to the MurCDEF family. MurE subfamily. Mg(2+) serves as cofactor. In terms of processing, carboxylation is probably crucial for Mg(2+) binding and, consequently, for the gamma-phosphate positioning of ATP.

The protein localises to the cytoplasm. It catalyses the reaction UDP-N-acetyl-alpha-D-muramoyl-L-alanyl-D-glutamate + L-lysine + ATP = UDP-N-acetyl-alpha-D-muramoyl-L-alanyl-gamma-D-glutamyl-L-lysine + ADP + phosphate + H(+). The protein operates within cell wall biogenesis; peptidoglycan biosynthesis. Its function is as follows. Catalyzes the addition of L-lysine to the nucleotide precursor UDP-N-acetylmuramoyl-L-alanyl-D-glutamate (UMAG) in the biosynthesis of bacterial cell-wall peptidoglycan. Cannot use diaminopimelate as substrate. Can accept L-ornithine as substrate, but the efficiency is 400-fold lower than that with L-lysine. Seems to have a role in beta-lactam antibiotic resistance. The protein is UDP-N-acetylmuramoyl-L-alanyl-D-glutamate--L-lysine ligase of Staphylococcus aureus (strain NCTC 8325 / PS 47).